A 72-amino-acid polypeptide reads, in one-letter code: DNA-directed RNA polymerase subunit Rpo10 (72 aa).

The Zn(2+) site is built by Cys-7, Cys-10, Cys-45, and Cys-46.

This sequence belongs to the archaeal Rpo10/eukaryotic RPB10 RNA polymerase subunit family. Part of the RNA polymerase complex. The cofactor is Zn(2+).

It localises to the cytoplasm. It carries out the reaction RNA(n) + a ribonucleoside 5'-triphosphate = RNA(n+1) + diphosphate. Functionally, DNA-dependent RNA polymerase (RNAP) catalyzes the transcription of DNA into RNA using the four ribonucleoside triphosphates as substrates. The sequence is that of DNA-directed RNA polymerase subunit Rpo10 from Methanopyrus kandleri (strain AV19 / DSM 6324 / JCM 9639 / NBRC 100938).